A 589-amino-acid polypeptide reads, in one-letter code: Serine/threonine-protein kinase shk2 (589 aa).

Residues 23 to 125 (GIIRSGWVML…WMDLISSRAL (103 aa)) form the PH domain. Residues 129 to 142 (VSSPMNPKHQVHVG) form the CRIB domain. The Protein kinase domain occupies 309 to 566 (FNVKHKLGQG…AAELLTHSFL (258 aa)). Residues 315–323 (LGQGASGSV) and Lys-343 contribute to the ATP site. Asp-434 functions as the Proton acceptor in the catalytic mechanism.

Belongs to the protein kinase superfamily. STE Ser/Thr protein kinase family. STE20 subfamily.

It catalyses the reaction L-seryl-[protein] + ATP = O-phospho-L-seryl-[protein] + ADP + H(+). The enzyme catalyses L-threonyl-[protein] + ATP = O-phospho-L-threonyl-[protein] + ADP + H(+). Forms an activated complex with GTP-bound Ras-like cdc42. Participates in Ras-dependent morphological control and mating response pathways. In Schizosaccharomyces pombe (strain 972 / ATCC 24843) (Fission yeast), this protein is Serine/threonine-protein kinase shk2 (shk2).